We begin with the raw amino-acid sequence, 157 residues long: UPF0225 protein Psyr_3863 (157 aa).

The protein belongs to the UPF0225 family.

This is UPF0225 protein Psyr_3863 from Pseudomonas syringae pv. syringae (strain B728a).